The chain runs to 250 residues: Protein UL24 homolog (250 aa).

The tract at residues 205–250 (TKSTKRARDKPTQVSRVPAQRSPVQKARGRKQAESHKKGASKGRAG) is disordered.

This sequence belongs to the herpesviridae UL24 family.

This is Protein UL24 homolog (20) from Alcelaphine herpesvirus 1 (strain C500) (AlHV-1).